The sequence spans 321 residues: Opticin (321 aa).

Residues 1-19 (MKLLALLSLLILMLQEART) form the signal peptide. Y61 is modified (sulfotyrosine). Residues 105 to 142 (LLAAPANHGLPTCLICVCLGSSVYCDDADLENIPPLPQ) enclose the LRRNT domain. LRR repeat units follow at residues 143–164 (TTAY…DFKG), 167–188 (KLKR…ALRL), 191–212 (ALRD…PTSI), 237–258 (KLQF…LPLS), 259–279 (LRSL…AFCD), and 289–309 (PLED…PSAY). A disulfide bridge connects residues C278 and C311. A glycan (N-linked (GlcNAc...) asparagine) is linked at N301.

It belongs to the small leucine-rich proteoglycan (SLRP) family. SLRP class III subfamily. As to quaternary structure, homodimer. O-glycosylated (sialylated oligosaccharides). Post-translationally, sulfated on tyrosine residues. In terms of processing, proteolytically cleaved by MMP1, MMP2, MMP3, MMP7, MMP8, MMP9, ADAMTS4, and ADAMTS5. Proteolytically cleaved by MMP13.

Its subcellular location is the secreted. The protein resides in the extracellular space. It localises to the extracellular matrix. Functionally, inhibits angiogenesis in the vitreous humor of the eye, and therefore represses neovascularization. Binds collagen fibrils. May be involved in collagen fiber organization via regulation of other members of the small leucine-rich repeat proteoglycan superfamily. The protein is Opticin (OPTC) of Bos taurus (Bovine).